Here is a 139-residue protein sequence, read N- to C-terminus: Ribulose bisphosphate carboxylase small subunit (139 aa).

It belongs to the RuBisCO small chain family. As to quaternary structure, heterohexadecamer of 8 large and 8 small subunits.

The protein localises to the plastid. The protein resides in the chloroplast. RuBisCO catalyzes two reactions: the carboxylation of D-ribulose 1,5-bisphosphate, the primary event in carbon dioxide fixation, as well as the oxidative fragmentation of the pentose substrate in the photorespiration process. Both reactions occur simultaneously and in competition at the same active site. Although the small subunit is not catalytic it is essential for maximal activity. In Trieres chinensis (Marine centric diatom), this protein is Ribulose bisphosphate carboxylase small subunit.